We begin with the raw amino-acid sequence, 387 residues long: Enoyl-[acyl-carrier-protein] reductase 2, mitochondrial (387 aa).

A mitochondrion-targeting transit peptide spans 1 to 23 (MYRNQLARASLRSTSSINQIRNM). The active-site Proton donor is Y79. Residues N172, 199-202 (NSAV), 222-224 (RDR), 297-300 (YGGM), 322-324 (FWV), and K382 each bind NADP(+).

The protein belongs to the zinc-containing alcohol dehydrogenase family. Quinone oxidoreductase subfamily. In terms of assembly, homodimer.

The protein localises to the mitochondrion matrix. The enzyme catalyses a 2,3-saturated acyl-[ACP] + NADP(+) = a (2E)-enoyl-[ACP] + NADPH + H(+). Catalyzes the NADPH-dependent reduction of trans-2-enoyl thioesters in mitochondrial fatty acid synthesis (fatty acid synthesis type II). Fatty acid chain elongation in mitochondria uses acyl carrier protein (ACP) as an acyl group carrier, but the enzyme accepts both ACP and CoA thioesters as substrates in vitro. Required for respiration and the maintenance of the mitochondrial compartment. This Debaryomyces hansenii (strain ATCC 36239 / CBS 767 / BCRC 21394 / JCM 1990 / NBRC 0083 / IGC 2968) (Yeast) protein is Enoyl-[acyl-carrier-protein] reductase 2, mitochondrial (ETR2).